Consider the following 979-residue polypeptide: UPF0182 protein Mb0065 (979 aa).

7 helical membrane passes run 19 to 41 (LVTA…DIYV), 63 to 85 (LAIV…LLAY), 114 to 136 (LFGW…FDWV), 174 to 196 (WLFV…FGGL), 208 to 230 (AARV…AYWL), 261 to 280 (LVLV…AIFL), and 285 to 307 (IPAM…WPLL). The segment at 898-948 (GTGRVATAPGGDAASAPPPGAGGPAPPQAVPPPRTTQPPAAPPRGPDVPPA) is disordered. The segment covering 902–912 (VATAPGGDAAS) has biased composition (low complexity). Residues 913–946 (APPPGAGGPAPPQAVPPPRTTQPPAAPPRGPDVP) are compositionally biased toward pro residues.

This sequence belongs to the UPF0182 family.

The protein localises to the cell membrane. The sequence is that of UPF0182 protein Mb0065 from Mycobacterium bovis (strain ATCC BAA-935 / AF2122/97).